Reading from the N-terminus, the 188-residue chain is Protein YOP1 (188 aa).

The Cytoplasmic segment spans residues 1-35 (MAEIAGNLQRILQSLDRQFAGNKYLQEFERKTGFP). The chain crosses the membrane as a helical span at residues 36–55 (KSYAIAGAGVAYLFIIFINV). Over 56-57 (GG) the chain is Lumenal. Residues 58 to 78 (VGEILSNFLGFVLPCYYSLHA) form a helical membrane-spanning segment. Residues 79-88 (IKTTTTADDT) are Cytoplasmic-facing. A helical transmembrane segment spans residues 89-105 (ELLTYWIVFAFFSVIEF). Topologically, residues 106–108 (WSK) are lumenal. A helical membrane pass occupies residues 109–127 (AILYWVPFYWFFKTIFLIF). Over 128 to 188 (IALPQLGGAS…TGAASHQSSD (61 aa)) the chain is Cytoplasmic. The interval 163-188 (ISSKMEQAAKGASARATGAASHQSSD) is disordered. Low complexity predominate over residues 170 to 188 (AAKGASARATGAASHQSSD).

Belongs to the DP1 family. As to quaternary structure, oligomer.

It is found in the endoplasmic reticulum membrane. Its subcellular location is the golgi apparatus membrane. In terms of biological role, required to generate and maintain the structure of the tubular endoplasmic reticulum network and the vacuole. Induces high curvature in membranes and causes membrane tubule formation. Involved in membrane/vesicle trafficking. This Eremothecium gossypii (strain ATCC 10895 / CBS 109.51 / FGSC 9923 / NRRL Y-1056) (Yeast) protein is Protein YOP1 (YOP1).